The chain runs to 204 residues: Inositol diphosphatase DSP5 (204 aa).

Positions 19-168 (NFSMVEDEIY…FDVLRLKQCL (150 aa)) constitute a Tyrosine-protein phosphatase domain. The WPD loop important for active site topology stretch occupies residues 75–87 (FGIEGKTDPPTPM). Cys-111 (phosphocysteine intermediate) is an active-site residue.

Belongs to the protein-tyrosine phosphatase family. Atypical dual-specificity phosphatase Siw14-like subfamily. In terms of tissue distribution, highly expressed in flowers. Expressed at low levels in roots, leaves, stems and siliques.

The catalysed reaction is 5-diphospho-1D-myo-inositol 1,2,3,4,6-pentakisphosphate + H2O = 1D-myo-inositol hexakisphosphate + phosphate + H(+). The enzyme catalyses 1,5-bis(diphospho)-1D-myo-inositol 2,3,4,6-tetrakisphosphate + H2O = 1-diphospho-1D-myo-inositol 2,3,4,5,6-pentakisphosphate + phosphate + 2 H(+). It carries out the reaction 3,5-bis(diphospho)-1D-myo-inositol 1,2,4,6-tetrakisphosphate + H2O = 3-diphospho-1D-myo-inositol 1,2,4,5,6-pentakisphosphate + phosphate + 2 H(+). It catalyses the reaction 6-diphospho-1D-myo-inositol pentakisphosphate + H2O = 1D-myo-inositol hexakisphosphate + phosphate + H(+). Its function is as follows. Cleaves the beta-phosphate at the 5-position of soluble inositol pyrophosphates. Has highest activity on 5-diphosphoinositol 1,2,3,4,6-pentakisphosphate (5-InsP(7)). Possesses low phosphotyrosine phosphatase activity in vitro. Dephosphorylates the phosphoinositides PI(3,5)P2. Hydrolyzes O-methylfluorescein phosphate in vitro. This Arabidopsis thaliana (Mouse-ear cress) protein is Inositol diphosphatase DSP5.